The primary structure comprises 397 residues: Flavohemoprotein (397 aa).

One can recognise a Globin domain in the interval 4–140 (SFSPHTITLI…IANLLKDREA (137 aa)). Heme b is bound at residue His87. Catalysis depends on charge relay system residues Tyr97 and Glu139. Positions 151-397 (GGWIHWRRFV…FGPMDEEMAA (247 aa)) are reductase. Residues 154 to 258 (IHWRRFVISK…TPPVGDFFLP (105 aa)) form the FAD-binding FR-type domain. FAD-binding positions include Tyr192 and 207-210 (RNYS). 271 to 276 (GVGLTP) provides a ligand contact to NADP(+). 387–390 (FFGP) serves as a coordination point for FAD.

This sequence belongs to the globin family. Two-domain flavohemoproteins subfamily. The protein in the C-terminal section; belongs to the flavoprotein pyridine nucleotide cytochrome reductase family. Heme b serves as cofactor. Requires FAD as cofactor.

The enzyme catalyses 2 nitric oxide + NADPH + 2 O2 = 2 nitrate + NADP(+) + H(+). It catalyses the reaction 2 nitric oxide + NADH + 2 O2 = 2 nitrate + NAD(+) + H(+). Is involved in NO detoxification in an aerobic process, termed nitric oxide dioxygenase (NOD) reaction that utilizes O(2) and NAD(P)H to convert NO to nitrate, which protects the bacterium from various noxious nitrogen compounds. Therefore, plays a central role in the inducible response to nitrosative stress. This is Flavohemoprotein from Xylella fastidiosa (strain Temecula1 / ATCC 700964).